Consider the following 1215-residue polypeptide: Cellulose synthase-like protein D4 (1215 aa).

2 disordered regions span residues 24-46 (GGDA…SLGS) and 206-231 (SDTD…ERDQ). Positions 207–222 (DTDESDSVTDDDDDEA) are enriched in acidic residues. 2 helical membrane-spanning segments follow: residues 321–341 (AILS…GFFL) and 352–372 (AVWL…SWLL). Residues aspartate 452 and aspartate 905 contribute to the active site. The next 6 membrane-spanning stretches (helical) occupy residues 988-1008 (VFLL…KFIV), 1014-1034 (TFLA…LLEI), 1060-1080 (PAAV…SFTL), 1114-1134 (LMVP…VAAA), 1147-1167 (LLGG…FAKG), and 1177-1197 (TIVF…WVYI).

This sequence belongs to the glycosyltransferase 2 family. Plant cellulose synthase-like D subfamily.

The protein localises to the golgi apparatus membrane. Functionally, thought to be a Golgi-localized beta-glycan synthase that polymerize the backbones of noncellulosic polysaccharides (hemicelluloses) of plant cell wall. The chain is Cellulose synthase-like protein D4 (CSLD4) from Oryza sativa subsp. japonica (Rice).